A 347-amino-acid polypeptide reads, in one-letter code: 3-isopropylmalate dehydrogenase (347 aa).

Substrate contacts are provided by Arg-94, Arg-104, Arg-128, and Asp-219. The Mg(2+) site is built by Asp-219, Asp-243, and Asp-247. 279-291 is an NAD(+) binding site; the sequence is GSAPDIAGQGKAD.

Belongs to the isocitrate and isopropylmalate dehydrogenases family. LeuB type 2 subfamily. Homodimer. Mg(2+) serves as cofactor. Requires Mn(2+) as cofactor.

It is found in the cytoplasm. It carries out the reaction (2R,3S)-3-isopropylmalate + NAD(+) = 4-methyl-2-oxopentanoate + CO2 + NADH. It functions in the pathway amino-acid biosynthesis; L-leucine biosynthesis; L-leucine from 3-methyl-2-oxobutanoate: step 3/4. Functionally, catalyzes the oxidation of 3-carboxy-2-hydroxy-4-methylpentanoate (3-isopropylmalate) to 3-carboxy-4-methyl-2-oxopentanoate. The product decarboxylates to 4-methyl-2 oxopentanoate. The polypeptide is 3-isopropylmalate dehydrogenase (Streptomyces coelicolor (strain ATCC BAA-471 / A3(2) / M145)).